A 305-amino-acid chain; its full sequence is MKNFLESLIENNRQYVEHGKLASYIPELEKANKEDLGIYIVTLDGKEVGAGEYDKKFTIQSISKVITLMLAILDNGKDRVFSRVGVEPTGDSFNSIVSLERKPSKKPFNPMVNSGAILTTSLIEGDSEEEKFERILEFTRKVTGNDDIQLNEDVYLSEKETGDRNRALAYFMKSNGVIEGNIDDILDLYFKQCSLEVNAKDLARFGAMLANDGVLPWNGERVISREICRIIKTIMVTCGMYDDSGKFAVHIGIPAKSGVGGGIMAAVPRRMGIGIFGPSLDDKGNSIAGTHVMKDLSEELDLSIF.

Substrate-binding residues include Ser-61, Asn-113, Glu-158, Asn-165, Tyr-189, Tyr-241, and Val-259.

Belongs to the glutaminase family. In terms of assembly, homotetramer.

The catalysed reaction is L-glutamine + H2O = L-glutamate + NH4(+). This chain is Glutaminase 2, found in Clostridium perfringens (strain 13 / Type A).